The chain runs to 1084 residues: Myosin heavy chain, skeletal muscle (1084 aa).

3 disordered regions span residues Ser-1–Glu-20, Glu-270–Leu-292, and Arg-298–Glu-317. Residues Ser-1–Met-258 form an alpha-helical tailpiece (S2) region. The segment at Thr-259 to Glu-1084 is rodlike tail (S2 and LMM domains). Residues Ala-273–Leu-292 show a composition bias toward basic and acidic residues. Residues Gln-455–Glu-1084 are a coiled coil.

In terms of assembly, muscle myosin is a hexameric protein that consists of 2 heavy chain subunits (MHC), 2 alkali light chain subunits (MLC) and 2 regulatory light chain subunits (MLC-2).

The protein localises to the cytoplasm. It is found in the myofibril. In terms of biological role, muscle contraction. The polypeptide is Myosin heavy chain, skeletal muscle (Oryctolagus cuniculus (Rabbit)).